Here is a 403-residue protein sequence, read N- to C-terminus: Dynactin subunit 2-B (403 aa).

Residues 1-26 (MADPKYADLPGIARNEPDLYETSDLP) form a disordered region. The stretch at 99 to 132 (PQQKYQRLLHEVQELTQEVEKTQSTLKESATEEK) forms a coiled coil. The disordered stretch occupies residues 183 to 206 (AAKTRKDPEGKSSAKGPGPDNENL). The segment covering 184 to 194 (AKTRKDPEGKS) has biased composition (basic and acidic residues). A coiled-coil region spans residues 381–401 (KENLATVEDNFSSIDGRIKKL).

The protein belongs to the dynactin subunit 2 family. Subunit of dynactin, a multiprotein complex part of a tripartite complex with dynein and a adapter, such as BICDL1, BICD2 or HOOK3. The dynactin complex is built around ACTR1A/ACTB filament and consists of an actin-related filament composed of a shoulder domain, a pointed end and a barbed end. Its length is defined by its flexible shoulder domain. The soulder is composed of 2 DCTN1 subunits, 4 DCTN2 and 2 DCTN3.

It localises to the cytoplasm. It is found in the cytoskeleton. The protein localises to the microtubule organizing center. Its subcellular location is the centrosome. The protein resides in the membrane. Part of the dynactin complex that activates the molecular motor dynein for ultra-processive transport along microtubules. In the dynactin soulder domain, binds the ACTR1A filament and acts as a molecular ruler to determine the length. Modulates cytoplasmic dynein binding to an organelle, and plays a role in prometaphase chromosome alignment and spindle organization during mitosis. Involved in anchoring microtubules to centrosomes. The sequence is that of Dynactin subunit 2-B (dctn2-b) from Xenopus laevis (African clawed frog).